A 339-amino-acid polypeptide reads, in one-letter code: 1-aminocyclopropane-1-carboxylate deaminase (339 aa).

Lys52 is subject to N6-(pyridoxal phosphate)lysine. The active-site Nucleophile is Ser79.

It belongs to the ACC deaminase/D-cysteine desulfhydrase family. Homotrimer. The cofactor is pyridoxal 5'-phosphate.

The enzyme catalyses 1-aminocyclopropane-1-carboxylate + H2O = 2-oxobutanoate + NH4(+). Functionally, catalyzes a cyclopropane ring-opening reaction, the irreversible conversion of 1-aminocyclopropane-1-carboxylate (ACC) to ammonia and alpha-ketobutyrate. Allows growth on ACC as a nitrogen source. In Bradyrhizobium sp. (strain ORS 278), this protein is 1-aminocyclopropane-1-carboxylate deaminase.